A 530-amino-acid chain; its full sequence is MTNNIFKYFNIKELEKFGKFYKVKKEYEIPKKLESKLILVTSINPTPEGEGKTTTLIGINDCLNYFGKESIACLRQPSMGPYFGIKGGATGSGKCEIQNPEKVNCGFTNDFYAIEAANNLIMSVIENEIYFNTDLEIDPQKIIWKRCIDINDRSLRDINYQVSKNTKINSSFSITAASNLMALFCLAKSKSDFKKRIENTLVAFSKSNKAIYVKDLNIIDSIMLILDDALKPNLVFSQDNNPIIMHGGPFANIAHGCNSVIALSCGLNKAEYVLTEAGFGSELGAEKFINILCRETNLVPNLVVLTITLKAIKYHGVNNSNNTSPLTDEKEKIDIGFNNVIHHFNLLKNLNLNVCIVINKFSDDNKNELDYLFNKSSELTKTVISTMWQDGASKNKSLFETIIESVQEPKPINWTYDLKDNAVNKINDLSTKVYNGATITYSDLATAKLKDNENWIQDYYVCGAKTPYSPSIKNEYMDTNKHDIHVEDIEINHAVKFIIPIFSKTFLMPGLPKVPNAKKIKINFDKFKYE.

Position 46 to 53 (46 to 53 (TPEGEGKT)) interacts with ATP.

The protein belongs to the formate--tetrahydrofolate ligase family.

The enzyme catalyses (6S)-5,6,7,8-tetrahydrofolate + formate + ATP = (6R)-10-formyltetrahydrofolate + ADP + phosphate. The protein operates within one-carbon metabolism; tetrahydrofolate interconversion. The polypeptide is Formate--tetrahydrofolate ligase (Malacoplasma penetrans (strain HF-2) (Mycoplasma penetrans)).